A 401-amino-acid chain; its full sequence is Phosphoglycerate kinase, cytosolic (401 aa).

11 residues coordinate (2R)-3-phosphoglycerate: alanine 24, aspartate 25, asparagine 27, arginine 41, serine 63, histidine 64, glycine 66, arginine 67, arginine 122, histidine 154, and arginine 155. Residue glycine 200 participates in ADP binding. Glycine 200 serves as a coordination point for CDP. Positions 202 and 206 each coordinate AMP. Lysine 206 lines the ATP pocket. An ADP-binding site is contributed by glycine 224. Glycine 224 is a binding site for CDP. The AMP site is built by glycine 225 and glycine 297. Positions 225 and 297 each coordinate ATP. Residues glycine 322 and phenylalanine 327 each coordinate CDP. An ADP-binding site is contributed by phenylalanine 327. Glutamate 328 serves as a coordination point for AMP. Residues glutamate 328, aspartate 359, and serine 360 each coordinate ATP. Aspartate 359 lines the Mg(2+) pocket.

It belongs to the phosphoglycerate kinase family. As to quaternary structure, monomer. Mg(2+) is required as a cofactor.

Its subcellular location is the cytoplasm. It carries out the reaction (2R)-3-phosphoglycerate + ATP = (2R)-3-phospho-glyceroyl phosphate + ADP. It participates in carbohydrate degradation; glycolysis; pyruvate from D-glyceraldehyde 3-phosphate: step 2/5. This is Phosphoglycerate kinase, cytosolic from Triticum aestivum (Wheat).